The chain runs to 608 residues: MAGTLDLDKGCTVEELLRGCIEAFDDSGKVRDPQLVRMFLMMHPWYIPSSQLAAKLLHIYQQSRKDNSSSLQVKTCHLVRYWISAFPAEFDLNPELAEQIKELKALLDQEGNRRHSSLIDIENVPTYKWKRQVTQRNPVEQKKRKMSLLFDHLEPLELAAHLTYLEYRSFCKILFQDYHSFVTHGCTVDNPVLERFISLFNSVSQWVQLMILSKPTAPQRAGVITHFVHVAEELLHLQNFNTLMAVVGGLSHSSISRLKETHSHVSPETIKLWEGLTELVTATGNYGNYRRRLAACVGFRFPILGVHLKDLVALQLALPDWLDPARTRLNGAKMKQLFSILEELAMVTSLRPPVQANPDLLSLLMVSLDQYQTEDELYQLSLQREPRSKSSPTSPTTCTPPPRPPVLEEWTSAAKPKLDQAIMVEHIEKMVESVFRNFDVDGDGHISQEEFQIIRGNFPYLSAFGDLDQNQDGCISKEEMVSYFLRSSSMLGGRMGFVHNFHESNSLRPVACRHCKALILGIYKQGLKCRACGVNCHKQCKDRLSVECRRRAQSMSLEGSAPSPSPTHTHHRAFSFSLPRPGRRGSRPPEIREEEVQTVEDGVFDIHL.

The N-terminal Ras-GEF domain maps to 4–126; that stretch reads TLDLDKGCTV…SLIDIENVPT (123 aa). Residues Ser116, Ser117, and Ser147 each carry the phosphoserine modification. Positions 154–387 constitute a Ras-GEF domain; the sequence is EPLELAAHLT…YQLSLQREPR (234 aa). Residues 382 to 407 form a disordered region; sequence LQREPRSKSSPTSPTTCTPPPRPPVL. 2 consecutive EF-hand domains span residues 426 to 461 and 463 to 490; these read HIEK…FPYL and AFGD…SSSM. The Ca(2+) site is built by Asp439, Asp441, Asp443, His445, Glu450, Asp468, Asn470, Asp472, Cys474, and Glu479. The Phorbol-ester/DAG-type zinc finger occupies 498–548; that stretch reads VHNFHESNSLRPVACRHCKALILGIYKQGLKCRACGVNCHKQCKDRLSVEC. Residues Ser554 and Ser575 each carry the phosphoserine modification. Residues 556 to 591 form a disordered region; that stretch reads SLEGSAPSPSPTHTHHRAFSFSLPRPGRRGSRPPEI.

This sequence belongs to the RASGRP family. Forms a signaling complex with RAP1 and BRAF. Interacts with RAP1. Interacts with F-actin.

The protein localises to the cytoplasm. Its subcellular location is the cytosol. It is found in the cell membrane. It localises to the synapse. The protein resides in the synaptosome. The protein localises to the cell projection. Its subcellular location is the ruffle membrane. In terms of biological role, functions as a calcium- and DAG-regulated nucleotide exchange factor specifically activating Rap through the exchange of bound GDP for GTP. May also activate other GTPases such as RRAS, RRAS2, NRAS, KRAS but not HRAS. Functions in aggregation of platelets and adhesion of T-lymphocytes and neutrophils probably through inside-out integrin activation. May function in the muscarinic acetylcholine receptor M1/CHRM1 signaling pathway. The polypeptide is RAS guanyl-releasing protein 2 (RASGRP2) (Bos taurus (Bovine)).